Consider the following 764-residue polypeptide: Protective antigen (764 aa).

An N-terminal signal peptide occupies residues 1 to 29; it reads MKKRKVLIPLMALSTILVSSTGNLEVIQA. A domain 1, calcium-binding; LF and EF binding sites region spans residues 30 to 287; it reads EVKQENRLLN…PEARHPLVAA (258 aa). Residues 43-179 enclose the PA14 domain; it reads SSSQGLLGYY…NKKEVISSDN (137 aa). The segment at 176 to 214 is disordered; that stretch reads SSDNLQLPELKQKSSNSRKKRSTSAGPTVPDRDNDGIPD. Positions 206, 208, 210, 212, and 217 each coordinate Ca(2+). Residues 231–239 are alpha-clamp; the sequence is FLSPWISNI. The Ca(2+) site is built by serine 251, lysine 254, and aspartate 264. A domain 2, membrane insertion and heptamerization region spans residues 288–516; sequence YPIVHVDMEN…SEVLPQIQET (229 aa). The interval 302–333 is disordered; the sequence is KNEDQSTQNTDSQTRTISKNTSTSRTHTSEVH. Positions 306–327 are enriched in polar residues; the sequence is QSTQNTDSQTRTISKNTSTSRT. The next 2 beta stranded transmembrane spans lie at 331–342 and 345–354; these read EVHGNAEVHASF and IGGSVSAGFS. The domain 3, heptamerization stretch occupies residues 517-624; the sequence is TARIIFNGKD…KMNILIRDKR (108 aa). A domain 4, binding to the receptor region spans residues 625–764; that stretch reads FHYDRNNIAV…IFSKKGYEIG (140 aa).

The protein belongs to the bacterial binary toxin family. In terms of assembly, interacts with host ANTXR1 and ANTXR2. As to quaternary structure, homooligomer; homooligomerizes to form homoheptamers (PA-63(7)) or homooctamers (PA-63(8)). PA-63(7) or PA-63(8) form ring-shaped oligomers that are in a pre-pore conformation, which do not penetrate the host membrane. PA-63(8) displays an enhanced stability, suggesting that this form circulates in the blood to reach and exert toxicity even in distant tissues. Interacts with lethal factor (LF) and edema factor (EF); can bind LF and EF simultaneously and interaction takes place following homooligomerization on the host cell membrane. PA-63(7) homoheptamer interacts with three molecules of LF to form the PA(7)LF(3) complex, in which the relative position of the N-terminal alpha-helices in the three LFs determines which factor is translocated first. Proteolytic activation by FURIN cleaves the protein in two parts, PA-20 and PA-63; the latter is the mature protein. The cleavage occurs at the cell surface and probably in the serum of infected animals as well; both native and cleaved PA are able to bind to the cell receptor. The release of PA-20 from the remaining receptor-bound PA-63 exposes the binding site for EF and LF, and promotes oligomerization and internalization of the protein.

The protein resides in the secreted. It is found in the host cell membrane. The protein localises to the host endosome membrane. In terms of biological role, protective antigen constitutes one of the three proteins composing the anthrax toxin; it mediates attachment to host cells and translocation of edema factor (EF) and lethal factor (LF) into the host cytoplasm. PA associated with LF forms the lethal toxin (LeTx) and causes death when injected; PA associated with EF forms the edema toxin (EdTx) and produces edema. PA induces immunity to infection with anthrax. Its function is as follows. Mediates the attachment to host cells by binding host cell receptors ANTXR1 and ANTXR2. Following host cell surface attachment, PA is cleaved by FURIN to generate the PA-63 (Protective antigen PA-63) form, which constitutes the mature form of the protein that oligomerizes and forms a pore to translocate the enzymatic toxin components edema factor (EF) and lethal factor (LF) into the host cytosol. Functionally, mature form that oligomerizes and forms a pore to translocate the enzymatic toxin components edema factor (EF) and lethal factor (LF) into the host cytosol. Following attachment to host cell receptors and cleavage by FURIN, homooligomerizes to form ring-shaped oligomers that are in a pre-pore conformation, and associates with EF and LF. Toxin-leaded complexes are then endocytosed in a clathrin-dependent process, followed by a conformational change of oligomerized PA-63 from the pre-pore to pore state, which is triggered by the low pH in the endosome. Once active, the pore mediates unfolding of EF and LF, which pass through the pore and translocate into the host cytosol. This is Protective antigen (pagA) from Bacillus anthracis.